We begin with the raw amino-acid sequence, 378 residues long: Long-chain-fatty-acid--luciferin-component ligase (378 aa).

This sequence belongs to the LuxE family.

The catalysed reaction is a long-chain fatty acid + L-cysteinyl-[protein] + ATP = an S-(long-chain fatty acyl)-L-cysteinyl-[protein] + AMP + diphosphate. Its pathway is lipid metabolism; fatty acid reduction for biolumincescence. In terms of biological role, acyl-protein synthetase activates tetradecanoic acid. It is a component of the fatty acid reductase complex responsible for converting tetradecanoic acid to the aldehyde which serves as substrate in the luciferase-catalyzed reaction. The polypeptide is Long-chain-fatty-acid--luciferin-component ligase (Aliivibrio fischeri (Vibrio fischeri)).